The sequence spans 276 residues: Phosphonates import ATP-binding protein PhnC (276 aa).

The region spanning 5–253 (IRVERLNKTF…LLNDLYGADL (249 aa)) is the ABC transporter domain. 37-44 (GASGSGKS) contacts ATP.

Belongs to the ABC transporter superfamily. Phosphonates importer (TC 3.A.1.9.1) family. The complex is composed of two ATP-binding proteins (PhnC), two transmembrane proteins (PhnE) and a solute-binding protein (PhnD).

The protein localises to the cell inner membrane. It catalyses the reaction phosphonate(out) + ATP + H2O = phosphonate(in) + ADP + phosphate + H(+). Functionally, part of the ABC transporter complex PhnCDE involved in phosphonates import. Responsible for energy coupling to the transport system. This Stutzerimonas stutzeri (Pseudomonas stutzeri) protein is Phosphonates import ATP-binding protein PhnC.